The following is a 417-amino-acid chain: Spermidine/putrescine import ATP-binding protein PotA (417 aa).

The ABC transporter domain occupies 5–308; it reads IILKDLTKVF…PANRFVAQFV (304 aa). Position 37–44 (37–44) interacts with ATP; it reads GPSGCGKT. Residues 105–177 are insert; it reads DFNSKIKANL…TALKCKKINK (73 aa).

This sequence belongs to the ABC transporter superfamily. Spermidine/putrescine importer (TC 3.A.1.11.1) family. In terms of assembly, the complex is composed of two ATP-binding proteins (PotA), two transmembrane proteins (PotB and PotC) and a solute-binding protein (PotD).

It localises to the cell membrane. It carries out the reaction ATP + H2O + polyamine-[polyamine-binding protein]Side 1 = ADP + phosphate + polyamineSide 2 + [polyamine-binding protein]Side 1.. Part of the ABC transporter complex PotABCD involved in spermidine/putrescine import. Responsible for energy coupling to the transport system. In Onion yellows phytoplasma (strain OY-M), this protein is Spermidine/putrescine import ATP-binding protein PotA.